The following is a 516-amino-acid chain: RNA-binding region-containing protein 3 (516 aa).

Disordered stretches follow at residues 1 to 27, 106 to 130, 210 to 254, and 264 to 283; these read MAAP…RGDR, VHSP…DDKE, EDYM…DEDR, and ANLQ…RKKR. Ser-21 is subject to Phosphoserine. The region spanning 27-102 is the RRM 1 domain; that stretch reads RTLLVRHLPA…HTLVVEFAKE (76 aa). Ser-108 is subject to Phosphoserine. Over residues 115–130 the composition is skewed to basic and acidic residues; the sequence is TEKKKRSDDPVEDDKE. Positions 217–230 are enriched in pro residues; it reads APLPPTSPQPPEEP. Positions 269-283 are enriched in basic residues; the sequence is KRPKPIKQRHVRKKR. Positions 419-502 constitute an RRM 2 domain; it reads CRIYVKNLAK…KPMVVQFARS (84 aa).

In terms of assembly, component of the U11/U12 snRNPs that are part of the U12-type spliceosome. Found in a complex with m(7)G-capped U12 snRNA. Interacts with PDCD7.

It localises to the nucleus. In terms of biological role, participates in pre-mRNA U12-dependent splicing, performed by the minor spliceosome which removes U12-type introns. U12-type introns comprises less than 1% of all non-coding sequences. Binds to the 3'-stem-loop of m(7)G-capped U12 snRNA. This is RNA-binding region-containing protein 3 (RNPC3) from Bos taurus (Bovine).